Here is a 286-residue protein sequence, read N- to C-terminus: Thymidylate synthase (286 aa).

Position 140-141 (140-141 (RR)) interacts with dUMP. C161 serves as the catalytic Nucleophile. DUMP contacts are provided by residues 185–188 (RSND), N196, and 226–228 (HIY). D188 contacts (6R)-5,10-methylene-5,6,7,8-tetrahydrofolate. A285 contributes to the (6R)-5,10-methylene-5,6,7,8-tetrahydrofolate binding site.

This sequence belongs to the thymidylate synthase family. Bacterial-type ThyA subfamily. As to quaternary structure, homodimer.

The protein resides in the cytoplasm. It catalyses the reaction dUMP + (6R)-5,10-methylene-5,6,7,8-tetrahydrofolate = 7,8-dihydrofolate + dTMP. It functions in the pathway pyrimidine metabolism; dTTP biosynthesis. Functionally, catalyzes the reductive methylation of 2'-deoxyuridine-5'-monophosphate (dUMP) to 2'-deoxythymidine-5'-monophosphate (dTMP) while utilizing 5,10-methylenetetrahydrofolate (mTHF) as the methyl donor and reductant in the reaction, yielding dihydrofolate (DHF) as a by-product. This enzymatic reaction provides an intracellular de novo source of dTMP, an essential precursor for DNA biosynthesis. The sequence is that of Thymidylate synthase from Streptococcus thermophilus (strain ATCC BAA-250 / LMG 18311).